A 40-amino-acid chain; its full sequence is Protein YneP (40 aa).

The polypeptide is Protein YneP (Escherichia coli (strain K12)).